We begin with the raw amino-acid sequence, 302 residues long: Protease HtpX homolog (302 aa).

Residues 27–47 (LLMAIGGIIGGTAGMLIALII) form a helical membrane-spanning segment. Zn(2+) is bound at residue histidine 141. Glutamate 142 is a catalytic residue. Histidine 145 contributes to the Zn(2+) binding site. A run of 2 helical transmembrane segments spans residues 151–171 (VLVATIAATIAGAIGFLANMA) and 195–215 (IGAILMIIIVPIIATIVQLAI). Position 220 (glutamate 220) interacts with Zn(2+).

The protein belongs to the peptidase M48B family. Zn(2+) is required as a cofactor.

The protein localises to the cell inner membrane. This is Protease HtpX homolog from Aquifex aeolicus (strain VF5).